A 239-amino-acid polypeptide reads, in one-letter code: MAKLKRSNDRKVTNYVHVTKGGNATVGIANSIGLPSGQGFSCPDATAFCAKVCYAGKLEKVRKAVSSVLLHNWELLRDADLTDTVTLLSEMVAEFVKDCDRRKAPKLFRIHWDGDFFSPTYVAAWGRVIRDNPDVQFWAYTRVQTAAVYLHSQRLDNLALYFSADPDNIDVARFLEDKGINIAYVDTTFAKGKAEFPTAVRCPENNKAIDLINDKGSACARCGLCVNGRRNVLFSTTKK.

In Mycobacterium (Mycobacteriophage L5), this protein is Gene 88 protein (88).